The sequence spans 673 residues: Protein VirD3 (673 aa).

6 disordered regions span residues 36–73 (VAGEDGRDTSVPTALSRPPIEDMPHGVQETSASGGRLG), 171–216 (SPVN…GTSV), 229–409 (ERDT…LRSS), 478–497 (RLNGERSRSPKTSQASLEDF), 520–552 (EKGKQKISTEADTRFDLGNSSAPRVSPRSVTPL), and 585–673 (DSSR…GCGR). Composition is skewed to polar residues over residues 171–183 (SPVNRAAHSSNWQ), 193–216 (VQPSADRAQNSAQESSTFPDGTSV), 234–246 (SETTRNSGNTISS), and 268–277 (QSLSVTVTTP). Positions 278-287 (NSNAEASSHS) are enriched in low complexity. The span at 288 to 303 (AHTETLDDVSSDRSSE) shows a compositional bias: basic and acidic residues. Composition is skewed to basic and acidic residues over residues 520–534 (EKGKQKISTEADTRF) and 638–673 (AAEHSAIDDIWKRDDRDRRTHPYRGLDSRSREGCGR).

The chain is Protein VirD3 (virD3) from Agrobacterium fabrum (strain C58 / ATCC 33970) (Agrobacterium tumefaciens (strain C58)).